Reading from the N-terminus, the 105-residue chain is uncharacterized protein (105 aa).

This is an uncharacterized protein from Rickettsia prowazekii (strain Madrid E).